A 393-amino-acid polypeptide reads, in one-letter code: S-adenosylmethionine synthase (393 aa).

His-16 lines the ATP pocket. Asp-18 serves as a coordination point for Mg(2+). K(+) is bound at residue Glu-44. Residues Glu-57 and Gln-100 each contribute to the L-methionine site. A flexible loop region spans residues Gln-100–Gly-110. ATP contacts are provided by residues Asp-165–Lys-167, Arg-231–Phe-232, Asp-240, Arg-246–Lys-247, and Lys-267. Asp-240 is an L-methionine binding site. Lys-271 is an L-methionine binding site.

Belongs to the AdoMet synthase family. In terms of assembly, homotetramer; dimer of dimers. Mg(2+) is required as a cofactor. The cofactor is K(+).

The protein localises to the cytoplasm. It catalyses the reaction L-methionine + ATP + H2O = S-adenosyl-L-methionine + phosphate + diphosphate. Its pathway is amino-acid biosynthesis; S-adenosyl-L-methionine biosynthesis; S-adenosyl-L-methionine from L-methionine: step 1/1. Its function is as follows. Catalyzes the formation of S-adenosylmethionine (AdoMet) from methionine and ATP. The overall synthetic reaction is composed of two sequential steps, AdoMet formation and the subsequent tripolyphosphate hydrolysis which occurs prior to release of AdoMet from the enzyme. The polypeptide is S-adenosylmethionine synthase (Coxiella burnetii (strain Dugway 5J108-111)).